A 284-amino-acid chain; its full sequence is ATP synthase subunit a (284 aa).

5 helical membrane passes run 47 to 67, 108 to 128, 156 to 176, 233 to 253, and 254 to 274; these read AFHL…LIFF, VAPL…MDLV, VPTA…ILII, MIFI…SLPW, and AIFH…LVIV.

It belongs to the ATPase A chain family. As to quaternary structure, F-type ATPases have 2 components, CF(1) - the catalytic core - and CF(0) - the membrane proton channel. CF(1) has five subunits: alpha(3), beta(3), gamma(1), delta(1), epsilon(1). CF(0) has three main subunits: a(1), b(2) and c(9-12). The alpha and beta chains form an alternating ring which encloses part of the gamma chain. CF(1) is attached to CF(0) by a central stalk formed by the gamma and epsilon chains, while a peripheral stalk is formed by the delta and b chains.

Its subcellular location is the cell inner membrane. Functionally, key component of the proton channel; it plays a direct role in the translocation of protons across the membrane. The chain is ATP synthase subunit a from Ruthia magnifica subsp. Calyptogena magnifica.